The following is a 307-amino-acid chain: Mycothiol acetyltransferase (307 aa).

2 consecutive N-acetyltransferase domains span residues 12 to 152 (TRTD…APIP) and 160 to 307 (VTLR…YQRS). E43 provides a ligand contact to 1D-myo-inositol 2-(L-cysteinylamino)-2-deoxy-alpha-D-glucopyranoside. 87–89 (LAV) is a binding site for acetyl-CoA. 1D-myo-inositol 2-(L-cysteinylamino)-2-deoxy-alpha-D-glucopyranoside-binding residues include E187, K227, and E239. Acetyl-CoA contacts are provided by residues 243–245 (LGV) and 250–256 (HGGGLGK). Y278 is a 1D-myo-inositol 2-(L-cysteinylamino)-2-deoxy-alpha-D-glucopyranoside binding site.

It belongs to the acetyltransferase family. MshD subfamily. In terms of assembly, monomer.

The catalysed reaction is 1D-myo-inositol 2-(L-cysteinylamino)-2-deoxy-alpha-D-glucopyranoside + acetyl-CoA = mycothiol + CoA + H(+). Functionally, catalyzes the transfer of acetyl from acetyl-CoA to desacetylmycothiol (Cys-GlcN-Ins) to form mycothiol. In Salinispora arenicola (strain CNS-205), this protein is Mycothiol acetyltransferase.